The sequence spans 140 residues: ATP synthase epsilon chain (140 aa).

It belongs to the ATPase epsilon chain family. In terms of assembly, F-type ATPases have 2 components, CF(1) - the catalytic core - and CF(0) - the membrane proton channel. CF(1) has five subunits: alpha(3), beta(3), gamma(1), delta(1), epsilon(1). CF(0) has three main subunits: a, b and c.

It localises to the cell inner membrane. In terms of biological role, produces ATP from ADP in the presence of a proton gradient across the membrane. The chain is ATP synthase epsilon chain from Neisseria gonorrhoeae (strain ATCC 700825 / FA 1090).